The chain runs to 1119 residues: DNA-directed RNA polymerase subunit beta (1119 aa).

This sequence belongs to the RNA polymerase beta chain family. The RNAP catalytic core consists of 2 alpha, 1 beta, 1 beta' and 1 omega subunit. When a sigma factor is associated with the core the holoenzyme is formed, which can initiate transcription.

The catalysed reaction is RNA(n) + a ribonucleoside 5'-triphosphate = RNA(n+1) + diphosphate. Functionally, DNA-dependent RNA polymerase catalyzes the transcription of DNA into RNA using the four ribonucleoside triphosphates as substrates. This is DNA-directed RNA polymerase subunit beta from Thermus aquaticus.